The chain runs to 576 residues: Malonate--CoA ligase ACSF3, mitochondrial (576 aa).

The N-terminal 83 residues, 1–83 (MLPHVVLTFR…RSLRLSQEIC (83 aa)), are a transit peptide targeting the mitochondrion. ATP-binding positions include 202–210 (TSGTTGRPK), Asp-457, Arg-471, and Lys-563.

Belongs to the ATP-dependent AMP-binding enzyme family.

The protein localises to the mitochondrion. It catalyses the reaction tetracosanoate + ATP + CoA = tetracosanoyl-CoA + AMP + diphosphate. The enzyme catalyses malonate + ATP + CoA = malonyl-CoA + AMP + diphosphate. Catalyzes the initial reaction in intramitochondrial fatty acid synthesis, by activating malonate and methylmalonate, but not acetate, into their respective CoA thioester. May have some preference toward very-long-chain substrates. In Homo sapiens (Human), this protein is Malonate--CoA ligase ACSF3, mitochondrial.